Consider the following 396-residue polypeptide: Subtelomeric hrmA-associated cluster protein AFUB_079040 (396 aa).

Disordered regions lie at residues 1–32 and 347–396; these read MANKKKPSIKKSVNEPNPHLKQSHASGSQQSL and YPEN…ECGR. Residues 23–32 are compositionally biased toward polar residues; sequence SHASGSQQSL. Positions 367 to 380 are enriched in basic residues; it reads SKKKKDKKKKKSNK.

Functionally, part of the subtelomeric hrmA-associated cluster (HAC) containing genes that alter the hyphal surface (such as reduced total chitin or increased beta-glucan exposure) and perturb inter-hyphal interactions within the developing biofilms, resulting in a loss of vertically aligned polarized growing filaments. Consequently, this hypoxia-typic morphotype (called H-MORPH) with altered biofilm architecture leads to increased hypoxia fitness, increased host inflammation, rapid disease progression, and mortality in a murine model of invasive aspergillosis. In Aspergillus fumigatus (strain CBS 144.89 / FGSC A1163 / CEA10) (Neosartorya fumigata), this protein is Subtelomeric hrmA-associated cluster protein AFUB_079040.